Here is a 1527-residue protein sequence, read N- to C-terminus: Rho guanine nucleotide exchange factor 11 (1527 aa).

The interval 1–56 (MSIRLPHSIDRSASKKQSHLSSPIASWLSSLSSLGDSTPERTSPSHHRQPSDTSET) is disordered. Serine 2, serine 30, serine 32, and serine 51 each carry phosphoserine. Residues 19-37 (HLSSPIASWLSSLSSLGDS) show a composition bias toward low complexity. Positions 64–143 (CVIIQKDQHG…LTLLGSSPPS (80 aa)) constitute a PDZ domain. Residues 216 to 247 (PCGETSQRTCEGRLSVDSQEADSGLDSGTERF) form a disordered region. Residues serine 262 and serine 268 each carry the phosphoserine modification. Position 271 is a phosphothreonine (threonine 271). 2 positions are modified to phosphoserine: serine 272 and serine 288. Residues 323–503 (ESDIIFQDLE…NTFMSHAGIR (181 aa)) enclose the RGSL domain. Residues 461–487 (LRERQMAEKQLAALGDILSKYEEDRSA) adopt a coiled-coil conformation. 2 disordered regions span residues 506 to 569 (ESRS…QSIK) and 582 to 687 (NSHQ…GRRS). Positions 509–519 (SSCTAEKTQSA) are enriched in polar residues. 2 stretches are compositionally biased toward basic and acidic residues: residues 539-551 (SKKE…DKKR) and 624-645 (KGRE…RSDV). Residues serine 643 and serine 671 each carry the phosphoserine modification. The segment covering 656–672 (LHQSASSSASSLSTRSL) has biased composition (low complexity). Threonine 676 and threonine 680 each carry phosphothreonine. Residues 742-931 (DRQEVINELF…REILKFVNEA (190 aa)) enclose the DH domain. Positions 973-1087 (KMIHEGPLTW…WMELLEEAVQ (115 aa)) constitute a PH domain. Disordered regions lie at residues 1090–1184 (TKHP…NRGI), 1231–1321 (QAAG…TEPA), and 1379–1411 (AGPL…PQPY). Residues 1126–1138 (EVYHTEKEPKKLP) are compositionally biased toward basic and acidic residues. Polar residues predominate over residues 1242–1251 (PTPSVVSITS). Phosphoserine is present on residues serine 1299 and serine 1304. A compositionally biased stretch (low complexity) spans 1312-1321 (AAEAASTEPA). Phosphoserine is present on residues serine 1462 and serine 1463. Phosphothreonine occurs at positions 1467 and 1480. Positions 1480–1527 (TDYSLSPPAKEALASDSQNGQEQGSCPEEGSDIALEDSATDTAVSPGP) are disordered. Serine 1485 is modified (phosphoserine). A compositionally biased stretch (polar residues) spans 1494–1503 (SDSQNGQEQG). Positions 1508-1518 (EGSDIALEDSA) are enriched in acidic residues.

In terms of assembly, interacts with RHOA, GNA13 and SLC1A6. Interacts with GNA12, PLXNB1 and PLXNB2. Interacts (via DH domain) with GCSAM (via C-terminus). Found in a complex with ARHGEF11 and ARHGEF12; binding to ARHGEF11 and ARHGEF12 enhances CDC42 GEF activity of PLEKHG4B, and PLEKHG4B, in turn, inhibits ARHGEF11- and ARHGEF12-mediated RHOA activation. Post-translationally, phosphorylated by MAP kinase p38 (MAPK11, MAPK12, MAPK13 and/or MAPK14). In terms of processing, ubiquitinated by the BCR(KLHL20) E3 ubiquitin ligase complex when previously phosphorylated by MAP kinase p38 (MAPK11, MAPK12, MAPK13 and/or MAPK14), leading to its degradation, thereby restricting RhoA activity and facilitating growth cone spreading and neurite outgrowth.

It localises to the cytoplasm. It is found in the membrane. Its function is as follows. May play a role in the regulation of RhoA GTPase by guanine nucleotide-binding alpha-12 (GNA12) and alpha-13 (GNA13). Acts as guanine nucleotide exchange factor (GEF) for RhoA GTPase and may act as GTPase-activating protein (GAP) for GNA12 and GNA13. Involved in neurotrophin-induced neurite outgrowth. This Rattus norvegicus (Rat) protein is Rho guanine nucleotide exchange factor 11 (Arhgef11).